The following is a 375-amino-acid chain: Putative glycyl-radical enzyme activating enzyme MJ0021 (375 aa).

The Radical SAM core domain occupies 23 to 246 (QCVKGGKLVL…LKVIKEFKGD (224 aa)). [4Fe-4S] cluster-binding residues include cysteine 38, cysteine 42, and cysteine 45. S-adenosyl-L-methionine is bound by residues 44–46 (YCP) and glycine 87.

It belongs to the organic radical-activating enzymes family. The cofactor is [4Fe-4S] cluster.

The enzyme catalyses glycyl-[protein] + reduced [flavodoxin] + S-adenosyl-L-methionine = glycin-2-yl radical-[protein] + semiquinone [flavodoxin] + 5'-deoxyadenosine + L-methionine + H(+). This is Putative glycyl-radical enzyme activating enzyme MJ0021 from Methanocaldococcus jannaschii (strain ATCC 43067 / DSM 2661 / JAL-1 / JCM 10045 / NBRC 100440) (Methanococcus jannaschii).